Consider the following 302-residue polypeptide: uncharacterized protein (302 aa).

Disordered stretches follow at residues 1–167 and 180–199; these read MPCR…QSSE and PSLC…QRAS. The segment covering 39 to 54 has biased composition (basic and acidic residues); sequence EESHAPSRDPRDHQGS. Polar residues-rich tracts occupy residues 123–133 and 183–197; these read LSTSSCASVSR and CPSQ…SPQR.

This is an uncharacterized protein from Homo sapiens (Human).